The sequence spans 1010 residues: Probable LRR receptor-like serine/threonine-protein kinase At3g47570 (1010 aa).

The signal sequence occupies residues 1-19 (MRLFLLLAFNALMLLETHG). The Extracellular segment spans residues 20 to 645 (FTDETDRQAL…SSRLKKVVIG (626 aa)). N-linked (GlcNAc...) asparagine glycosylation is found at N48 and N88. LRR repeat units lie at residues 89–113 (LSFL…VGQL), 114–137 (SRLE…LYNC), 139–161 (RLLN…LGSL), 162–185 (TNLV…LGNL), 186–209 (TLLE…VAQL), 211–233 (QIWS…LYNL), 234–258 (SSLK…GILL), 259–282 (PNLL…LSNI), 283–307 (STLE…NVPN), and 310–333 (LLFL…TSLT). N-linked (GlcNAc...) asparagine glycosylation is present at N136. A glycan (N-linked (GlcNAc...) asparagine) is linked at N184. Residues N221 and N232 are each glycosylated (N-linked (GlcNAc...) asparagine). 2 N-linked (GlcNAc...) asparagine glycosylation sites follow: N281 and N294. N-linked (GlcNAc...) asparagine glycosylation is found at N334 and N358. 11 LRR repeats span residues 335-359 (CTQL…IANL), 361-384 (AKLV…IGNL), 385-408 (INLQ…LGKL), 410-432 (NLRY…IGNM), 433-455 (TMLE…SLGN), 457-480 (SHLL…IMKI), 481-504 (QQLL…IGAL), 505-528 (QNLG…LGNC), 530-551 (TMES…LKGL), 552-574 (VGVK…YFAS), and 575-600 (FSKL…IFEN). N-linked (GlcNAc...) asparagine glycans are attached at residues N431, N455, and N470. N582 and N600 each carry an N-linked (GlcNAc...) asparagine glycan. Residues 646–666 (VSVGITLLLLLFMASVTLIWL) form a helical membrane-spanning segment. The Cytoplasmic segment spans residues 667 to 1010 (RKRKKNKETN…FFKASRTTWR (344 aa)). T699 carries the post-translational modification Phosphothreonine. Residues 702 to 1002 (FSSSNMVGSG…ELISIRERFF (301 aa)) form the Protein kinase domain. Residues 708 to 716 (VGSGSFGTV) and K731 contribute to the ATP site. Y781 and Y826 each carry phosphotyrosine. The active-site Proton acceptor is the D839. Y887 is subject to Phosphotyrosine.

It belongs to the protein kinase superfamily. Ser/Thr protein kinase family.

The protein resides in the cell membrane. It catalyses the reaction L-seryl-[protein] + ATP = O-phospho-L-seryl-[protein] + ADP + H(+). The catalysed reaction is L-threonyl-[protein] + ATP = O-phospho-L-threonyl-[protein] + ADP + H(+). The sequence is that of Probable LRR receptor-like serine/threonine-protein kinase At3g47570 from Arabidopsis thaliana (Mouse-ear cress).